Here is a 450-residue protein sequence, read N- to C-terminus: Tubulin alpha chain (450 aa).

Position 11 (Gln-11) interacts with GTP. An N6-acetyllysine modification is found at Lys-40. 7 residues coordinate GTP: Glu-71, Ser-140, Gly-144, Thr-145, Thr-179, Asn-206, and Asn-228. Residue Glu-71 coordinates Mg(2+). The active site involves Glu-254.

Belongs to the tubulin family. Dimer of alpha and beta chains. A typical microtubule is a hollow water-filled tube with an outer diameter of 25 nm and an inner diameter of 15 nM. Alpha-beta heterodimers associate head-to-tail to form protofilaments running lengthwise along the microtubule wall with the beta-tubulin subunit facing the microtubule plus end conferring a structural polarity. Microtubules usually have 13 protofilaments but different protofilament numbers can be found in some organisms and specialized cells. Mg(2+) serves as cofactor. Post-translationally, acetylation of alpha chains at Lys-40 stabilizes microtubules and affects affinity and processivity of microtubule motors. This modification has a role in multiple cellular functions, ranging from cell motility, cell cycle progression or cell differentiation to intracellular trafficking and signaling.

Its subcellular location is the cytoplasm. The protein localises to the cytoskeleton. It catalyses the reaction GTP + H2O = GDP + phosphate + H(+). Its function is as follows. Tubulin is the major constituent of microtubules, a cylinder consisting of laterally associated linear protofilaments composed of alpha- and beta-tubulin heterodimers. Microtubules grow by the addition of GTP-tubulin dimers to the microtubule end, where a stabilizing cap forms. Below the cap, tubulin dimers are in GDP-bound state, owing to GTPase activity of alpha-tubulin. The polypeptide is Tubulin alpha chain (Oxytricha granulifera (Ciliate)).